A 266-amino-acid polypeptide reads, in one-letter code: Cell wall synthesis protein Wag31 (266 aa).

Positions 31 to 64 (FLDLVENELTQLIEENSDLRQRIEELDHELAAGG) form a coiled coil. Phosphothreonine is present on Thr-77. A coiled-coil region spans residues 152–203 (TAEATVAEAQQRADAMLADAQTRSEVQSRQAQEKADALQAEAERKHSEIMGA). The interval 239–266 (ELGQRGSAAPVDSNADAGGFDQFNRGNN) is disordered.

The protein belongs to the DivIVA family. Forms homooligomers. In terms of processing, phosphorylated by PknA.

The protein resides in the cytoplasm. Important for maintaining cell shape and cell wall integrity by localizing peptidoglycan synthesis to the cell poles. The protein is Cell wall synthesis protein Wag31 (wag31) of Mycobacterium leprae (strain TN).